Here is a 224-residue protein sequence, read N- to C-terminus: Ribonuclease HII (224 aa).

Positions 36 to 224 constitute an RNase H type-2 domain; the sequence is RGVAGVDEVG…RRSFLRRFLG (189 aa). Residues Asp-42, Glu-43, and Asp-138 each contribute to the a divalent metal cation site.

The protein belongs to the RNase HII family. Mn(2+) is required as a cofactor. Requires Mg(2+) as cofactor.

The protein resides in the cytoplasm. The catalysed reaction is Endonucleolytic cleavage to 5'-phosphomonoester.. Its function is as follows. Endonuclease that specifically degrades the RNA of RNA-DNA hybrids. The protein is Ribonuclease HII of Parasynechococcus marenigrum (strain WH8102).